The sequence spans 129 residues: KVYGRCELAAAMKRLGLDNYRGYSLGNWVCAAKFESNFNTHATNRNTDGSTDYGILQINSRWWCNDGRTPGSRNLCNIPCSALLSSDITASVNCAKKIVSGGSGMNAWVAWRNRCKGTDVQAWIRGCRL.

A C-type lysozyme domain is found at 1–129 (KVYGRCELAA…VQAWIRGCRL (129 aa)). Intrachain disulfides connect cysteine 6–cysteine 127, cysteine 30–cysteine 115, cysteine 64–cysteine 80, and cysteine 76–cysteine 94. Catalysis depends on residues glutamate 35 and aspartate 52.

Belongs to the glycosyl hydrolase 22 family. Monomer.

The protein localises to the secreted. The catalysed reaction is Hydrolysis of (1-&gt;4)-beta-linkages between N-acetylmuramic acid and N-acetyl-D-glucosamine residues in a peptidoglycan and between N-acetyl-D-glucosamine residues in chitodextrins.. In terms of biological role, lysozymes have primarily a bacteriolytic function; those in tissues and body fluids are associated with the monocyte-macrophage system and enhance the activity of immunoagents. This is Lysozyme C (LYZ) from Tragopan satyra (Satyr tragopan).